A 901-amino-acid polypeptide reads, in one-letter code: Core protein VP3 (901 aa).

Belongs to the orbivirus VP3 family.

It localises to the virion. The VP3 protein is one of the five proteins (with VP1, VP4, VP6 and VP7) which form the inner capsid of the virus. This chain is Core protein VP3 (Segment-3), found in Bluetongue virus 10 (isolate USA) (BTV 10).